The primary structure comprises 212 residues: ATP phosphoribosyltransferase (212 aa).

Belongs to the ATP phosphoribosyltransferase family. Short subfamily. Heteromultimer composed of HisG and HisZ subunits.

It is found in the cytoplasm. The enzyme catalyses 1-(5-phospho-beta-D-ribosyl)-ATP + diphosphate = 5-phospho-alpha-D-ribose 1-diphosphate + ATP. It participates in amino-acid biosynthesis; L-histidine biosynthesis; L-histidine from 5-phospho-alpha-D-ribose 1-diphosphate: step 1/9. Functionally, catalyzes the condensation of ATP and 5-phosphoribose 1-diphosphate to form N'-(5'-phosphoribosyl)-ATP (PR-ATP). Has a crucial role in the pathway because the rate of histidine biosynthesis seems to be controlled primarily by regulation of HisG enzymatic activity. The sequence is that of ATP phosphoribosyltransferase from Prochlorococcus marinus (strain MIT 9312).